The primary structure comprises 242 residues: Guanylate kinase (242 aa).

In terms of domain architecture, Guanylate kinase-like spans 22-200 (GLLIVMTGAS…AVRELQAVQR (179 aa)). 29–36 (GASGVGKG) is an ATP binding site.

It belongs to the guanylate kinase family.

The protein localises to the cytoplasm. It catalyses the reaction GMP + ATP = GDP + ADP. In terms of biological role, essential for recycling GMP and indirectly, cGMP. In Deinococcus geothermalis (strain DSM 11300 / CIP 105573 / AG-3a), this protein is Guanylate kinase.